The primary structure comprises 170 residues: Acetyl-CoA decarbonylase/synthase complex subunit epsilon 2 (170 aa).

Belongs to the CdhB family. Heterotetramer of two alpha and two epsilon subunits. The ACDS complex is made up of alpha, epsilon, beta, gamma and delta subunits with a probable stoichiometry of (alpha(2)epsilon(2))(4)-beta(8)-(gamma(1)delta(1))(8).

The protein operates within one-carbon metabolism; methanogenesis from acetate. Functionally, part of a complex that catalyzes the reversible cleavage of acetyl-CoA, allowing growth on acetate as sole source of carbon and energy. The alpha-epsilon subcomponent functions as a carbon monoxide dehydrogenase. The precise role of the epsilon subunit is unclear; it may have a stabilizing role within the alpha(2)epsilon(2) component and/or be involved in electron transfer to FAD during a potential FAD-mediated CO oxidation. This chain is Acetyl-CoA decarbonylase/synthase complex subunit epsilon 2 (cdhB2), found in Methanosarcina thermophila.